The sequence spans 501 residues: Aspartyl/glutamyl-tRNA(Asn/Gln) amidotransferase subunit B (501 aa).

The protein belongs to the GatB/GatE family. GatB subfamily. In terms of assembly, heterotrimer of A, B and C subunits.

The catalysed reaction is L-glutamyl-tRNA(Gln) + L-glutamine + ATP + H2O = L-glutaminyl-tRNA(Gln) + L-glutamate + ADP + phosphate + H(+). It catalyses the reaction L-aspartyl-tRNA(Asn) + L-glutamine + ATP + H2O = L-asparaginyl-tRNA(Asn) + L-glutamate + ADP + phosphate + 2 H(+). Allows the formation of correctly charged Asn-tRNA(Asn) or Gln-tRNA(Gln) through the transamidation of misacylated Asp-tRNA(Asn) or Glu-tRNA(Gln) in organisms which lack either or both of asparaginyl-tRNA or glutaminyl-tRNA synthetases. The reaction takes place in the presence of glutamine and ATP through an activated phospho-Asp-tRNA(Asn) or phospho-Glu-tRNA(Gln). The chain is Aspartyl/glutamyl-tRNA(Asn/Gln) amidotransferase subunit B from Agrobacterium fabrum (strain C58 / ATCC 33970) (Agrobacterium tumefaciens (strain C58)).